The following is a 379-amino-acid chain: MINLLDFNKTELVRFCGEMGEKPYRARQLLRWVHQSGKTDFMEMSDLAKGFRHKLMECAVVQLPEIVSDHTAGDGTRKWLLSTGAGNAVEMVFIPEPSRGTLCVSSQVGCALACSFCSTGRQGFNRNLSVAEIIGQLWWANRLLEAGSHDPFPLDTTRVQTDKPETRRPVTNVVMMGMGEPLANFENLVTALDLMLSDDAYGLSRRRVTVSTSGLVPALDRLRERCPVALAVSLHAPNDALRDQLVPINKKYPIRDLLAACERYLPAAPRDFITFEYVMLKGVNDSVALARELVQLVRNVPCKLNLIPFNAFSGSGYERSGAEAIGNFRDVLMQAGIVTTVRKTRGDDIAAACGQLAGQVRDKTRRTSGCGTGQPAVAR.

The Proton acceptor role is filled by glutamate 90. Residues glutamate 96–aspartate 348 form the Radical SAM core domain. A disulfide bridge connects residues cysteine 103 and cysteine 353. Residues cysteine 110, cysteine 114, and cysteine 117 each contribute to the [4Fe-4S] cluster site. S-adenosyl-L-methionine-binding positions include glycine 179–glutamate 180, serine 211, serine 233–histidine 235, and asparagine 310. Residue cysteine 353 is the S-methylcysteine intermediate of the active site.

It belongs to the radical SAM superfamily. RlmN family. [4Fe-4S] cluster is required as a cofactor.

It is found in the cytoplasm. It catalyses the reaction adenosine(2503) in 23S rRNA + 2 reduced [2Fe-2S]-[ferredoxin] + 2 S-adenosyl-L-methionine = 2-methyladenosine(2503) in 23S rRNA + 5'-deoxyadenosine + L-methionine + 2 oxidized [2Fe-2S]-[ferredoxin] + S-adenosyl-L-homocysteine. The enzyme catalyses adenosine(37) in tRNA + 2 reduced [2Fe-2S]-[ferredoxin] + 2 S-adenosyl-L-methionine = 2-methyladenosine(37) in tRNA + 5'-deoxyadenosine + L-methionine + 2 oxidized [2Fe-2S]-[ferredoxin] + S-adenosyl-L-homocysteine. Specifically methylates position 2 of adenine 2503 in 23S rRNA and position 2 of adenine 37 in tRNAs. m2A2503 modification seems to play a crucial role in the proofreading step occurring at the peptidyl transferase center and thus would serve to optimize ribosomal fidelity. The protein is Dual-specificity RNA methyltransferase RlmN of Nitrosomonas europaea (strain ATCC 19718 / CIP 103999 / KCTC 2705 / NBRC 14298).